The primary structure comprises 499 residues: uncharacterized protein (499 aa).

This is an uncharacterized protein from Methanothermobacter thermautotrophicus (Methanobacterium thermoformicicum).